Here is a 181-residue protein sequence, read N- to C-terminus: MKLRKTKFFSQLKHQVLTANQKPFLFYKLTMIGFVGFIILLQVFILRNALNGEMDNTMVANSGFINIYVIRNKGVGFSLLQNQTGLVYFLQGLLSVIALVFLVFMVKYSYIFWITTLAFGSLGNFFDRLTSANDSVLDYFIFQNGSSVFNFADCCITFGFIGLFFCFLIQMFKEFKHSKNQ.

The next 3 membrane-spanning stretches (helical) occupy residues 25 to 45, 86 to 106, and 107 to 127; these read LFYKLTMIGFVGFIILLQVFI, LVYFLQGLLSVIALVFLVFMV, and KYSYIFWITTLAFGSLGNFFD. Residues aspartate 138 and aspartate 153 contribute to the active site. The helical transmembrane segment at 149–169 threads the bilayer; the sequence is FNFADCCITFGFIGLFFCFLI.

This sequence belongs to the peptidase A8 family.

It localises to the cell membrane. It catalyses the reaction Release of signal peptides from bacterial membrane prolipoproteins. Hydrolyzes -Xaa-Yaa-Zaa-|-(S,diacylglyceryl)Cys-, in which Xaa is hydrophobic (preferably Leu), and Yaa (Ala or Ser) and Zaa (Gly or Ala) have small, neutral side chains.. It functions in the pathway protein modification; lipoprotein biosynthesis (signal peptide cleavage). In terms of biological role, this protein specifically catalyzes the removal of signal peptides from prolipoproteins. This Mycoplasma genitalium (strain ATCC 33530 / DSM 19775 / NCTC 10195 / G37) (Mycoplasmoides genitalium) protein is Lipoprotein signal peptidase.